Here is a 545-residue protein sequence, read N- to C-terminus: Chaperonin GroEL (545 aa).

Residues 29–32, Lys-50, 86–90, Gly-414, 477–479, and Asp-493 each bind ATP; these read TMGP, DGTTT, and DAA.

It belongs to the chaperonin (HSP60) family. As to quaternary structure, forms a cylinder of 14 subunits composed of two heptameric rings stacked back-to-back. Interacts with the co-chaperonin GroES.

The protein localises to the cytoplasm. It catalyses the reaction ATP + H2O + a folded polypeptide = ADP + phosphate + an unfolded polypeptide.. In terms of biological role, together with its co-chaperonin GroES, plays an essential role in assisting protein folding. The GroEL-GroES system forms a nano-cage that allows encapsulation of the non-native substrate proteins and provides a physical environment optimized to promote and accelerate protein folding. The chain is Chaperonin GroEL from Campylobacter jejuni (strain RM1221).